The sequence spans 88 residues: Large ribosomal subunit protein bL27 (88 aa).

Residues 1–21 form a disordered region; the sequence is MAHKKGQGSTQNNRDSAGRRL.

It belongs to the bacterial ribosomal protein bL27 family.

The protein is Large ribosomal subunit protein bL27 of Helicobacter pylori (strain P12).